Here is a 110-residue protein sequence, read N- to C-terminus: UPF0122 protein STER_0914 (110 aa).

The protein belongs to the UPF0122 family.

In terms of biological role, might take part in the signal recognition particle (SRP) pathway. This is inferred from the conservation of its genetic proximity to ftsY/ffh. May be a regulatory protein. This is UPF0122 protein STER_0914 from Streptococcus thermophilus (strain ATCC BAA-491 / LMD-9).